The sequence spans 360 residues: Outer membrane protein P2 (360 aa).

An N-terminal signal peptide occupies residues 1–20; the sequence is MKKTLAALIVGAFAASAANA.

The protein belongs to the Gram-negative porin family. As to quaternary structure, homotrimer.

It is found in the cell outer membrane. Functionally, forms pores that allow passive diffusion of small molecules across the outer membrane. In Haemophilus influenzae, this protein is Outer membrane protein P2 (ompP2).